A 401-amino-acid polypeptide reads, in one-letter code: Cysteine desulfurase CsdA (401 aa).

At Lys-222 the chain carries N6-(pyridoxal phosphate)lysine. Residue Cys-358 is the Cysteine persulfide intermediate of the active site.

It belongs to the class-V pyridoxal-phosphate-dependent aminotransferase family. Csd subfamily. In terms of assembly, homodimer. Forms a heterodimer with CsdE. Pyridoxal 5'-phosphate is required as a cofactor.

The catalysed reaction is (sulfur carrier)-H + L-cysteine = (sulfur carrier)-SH + L-alanine. It catalyses the reaction L-selenocysteine + AH2 = hydrogenselenide + L-alanine + A + H(+). The enzyme catalyses 3-sulfino-L-alanine + H2O = sulfite + L-alanine + H(+). Its activity is regulated as follows. Cysteine desulfurase activity is increased 2-fold in the presence of CsdE. Functionally, catalyzes the removal of elemental sulfur and selenium atoms from L-cysteine, L-cystine, L-selenocysteine, and L-selenocystine to produce L-alanine, and transiently retains the released sulfur atom on a cysteine residue, in the form of a persulfide. Can also desulfinate L-cysteine sulfinate (3-sulfino-L-alanine), which is the best substrate of the enzyme. Functions as a selenium delivery protein in the pathway for the biosynthesis of selenophosphate. Seems to participate in Fe/S biogenesis by recruiting the SufBCD-SufE proteins. Transfers sulfur to CsdE that increases the cysteine desulfurase activity of CsdA. Can also transfer sulfur directly to TcdA/CsdL in vitro. Appears to support the function of TcdA in the generation of cyclic threonylcarbamoyladenosine at position 37 (ct(6)A37) in tRNAs that read codons beginning with adenine. This chain is Cysteine desulfurase CsdA (csdA), found in Escherichia coli (strain K12).